Reading from the N-terminus, the 607-residue chain is Siderophore iron transporter mirC (607 aa).

A run of 12 helical transmembrane segments spans residues 67-89, 129-148, 186-208, 223-245, 279-301, 311-328, 349-368, 388-410, 417-436, 446-468, 481-503, and 557-574; these read LVIAYISIFLMAFCTSLEGQTIM, VFGRFEAFCVSILIYVLGYI, SLLNRALLALLPELPFLVTVWIG, WGYGMWSIILPASFLPLALSLLL, IFGLALLSAAVTLILVPLTLAAN, IVAMIVIGVVCLILLPFW, TALAGCCLAFFYFMAFYFSV, GRVTQTFAFTSTIAAFGVSILIK, VYVTLGCVIYMTGLLLMLLY, VLGTQVIVGMGGGLLNVPVQLGV, TAMFLTSMEMGGAVGAAISGAVW, and LLVLALLATLPLIPLSLL. Residues 584–593 show a composition bias toward basic and acidic residues; sequence SESSDHDDAS. The disordered stretch occupies residues 584-607; sequence SESSDHDDASPRNGLGPGERAKRT.

Belongs to the major facilitator superfamily.

Its subcellular location is the membrane. The sequence is that of Siderophore iron transporter mirC (mirC) from Emericella nidulans (strain FGSC A4 / ATCC 38163 / CBS 112.46 / NRRL 194 / M139) (Aspergillus nidulans).